Reading from the N-terminus, the 832-residue chain is Putative pentatricopeptide repeat-containing protein At5g08310, mitochondrial (832 aa).

The transit peptide at Met-1–Leu-27 directs the protein to the mitochondrion. PPR repeat units follow at residues Asp-105–Met-139, Ser-140–Val-174, Asn-176–Phe-212, Asp-213–Asp-247, Thr-252–Leu-281, Asn-282–Ala-316, Asp-317–Pro-351, Asp-352–Lys-383, Val-385–Asn-415, Asp-438–Pro-472, Gly-473–Pro-507, Ser-508–Pro-542, Trp-543–Gly-577, His-578–Pro-612, Asp-613–Pro-647, Thr-648–Pro-682, Asp-683–Pro-717, Asn-718–Pro-752, and Asp-753–Pro-787.

Belongs to the PPR family. P subfamily.

Its subcellular location is the mitochondrion. The protein is Putative pentatricopeptide repeat-containing protein At5g08310, mitochondrial of Arabidopsis thaliana (Mouse-ear cress).